The primary structure comprises 328 residues: Carbonic anhydrase-related protein 11 (328 aa).

The signal sequence occupies residues 1 to 22; the sequence is MGAAARLSAPRALVLWAALGAA. The Alpha-carbonic anhydrase domain maps to 33–303; it reads DWWSYKDNLQ…LAHRALRGNR (271 aa). Residues N118, N170, and N260 are each glycosylated (N-linked (GlcNAc...) asparagine). The segment at 300–328 is disordered; the sequence is RGNRDPRHPERRCRGPNYRLHVDGAPHGR. Basic and acidic residues predominate over residues 319 to 328; it reads LHVDGAPHGR.

Belongs to the alpha-carbonic anhydrase family.

Its subcellular location is the secreted. Does not have a catalytic activity. The sequence is that of Carbonic anhydrase-related protein 11 (CA11) from Bos taurus (Bovine).